The chain runs to 56 residues: Ovomucoid (56 aa).

Residues 6–56 enclose the Kazal-like domain; the sequence is VDCSDHPKPACLQEQKPLCGSDNKTYDNKCSFCNAVVDSNGTLTLSHFGKC. Cystine bridges form between Cys-8–Cys-38, Cys-16–Cys-35, and Cys-24–Cys-56. Asn-45 carries an N-linked (GlcNAc...) asparagine glycan.

It localises to the secreted. The polypeptide is Ovomucoid (Penelope jacquacu (Spix's guan)).